The sequence spans 1017 residues: Peroxisomal ATPase PEX6 (1017 aa).

Residue 758–765 (GPPGTGKT) coordinates ATP.

Belongs to the AAA ATPase family. In terms of assembly, interacts with PEX1; forming the PEX1-PEX6 AAA ATPase complex, which is composed of a heterohexamer formed by a trimer of PEX1-PEX6 dimers.

It localises to the cytoplasm. Its subcellular location is the cytosol. The protein resides in the peroxisome membrane. It carries out the reaction ATP + H2O = ADP + phosphate + H(+). Functionally, component of the PEX1-PEX6 AAA ATPase complex, a protein dislocase complex that mediates the ATP-dependent extraction of the PEX5 receptor from peroxisomal membranes, an essential step for PEX5 recycling. Specifically recognizes PEX5 monoubiquitinated at 'Cys-6', and pulls it out of the peroxisome lumen through the PEX2-PEX10-PEX12 retrotranslocation channel. Extraction by the PEX1-PEX6 AAA ATPase complex is accompanied by unfolding of the TPR repeats and release of bound cargo from PEX5. The protein is Peroxisomal ATPase PEX6 (PEX6) of Candida glabrata (strain ATCC 2001 / BCRC 20586 / JCM 3761 / NBRC 0622 / NRRL Y-65 / CBS 138) (Yeast).